Here is a 228-residue protein sequence, read N- to C-terminus: 2,3-bisphosphoglycerate-dependent phosphoglycerate mutase (228 aa).

Substrate is bound by residues 8–15 (RHGQSEWN), 21–22 (TG), arginine 60, 87–90 (ERHY), lysine 98, 114–115 (RR), and 183–184 (GN). Histidine 9 functions as the Tele-phosphohistidine intermediate in the catalytic mechanism. The active-site Proton donor/acceptor is the glutamate 87.

Belongs to the phosphoglycerate mutase family. BPG-dependent PGAM subfamily.

The catalysed reaction is (2R)-2-phosphoglycerate = (2R)-3-phosphoglycerate. The protein operates within carbohydrate degradation; glycolysis; pyruvate from D-glyceraldehyde 3-phosphate: step 3/5. Its function is as follows. Catalyzes the interconversion of 2-phosphoglycerate and 3-phosphoglycerate. The polypeptide is 2,3-bisphosphoglycerate-dependent phosphoglycerate mutase (Staphylococcus aureus (strain MRSA252)).